The following is a 581-amino-acid chain: Arginine--tRNA ligase (581 aa).

The 'HIGH' region signature appears at 131-141; that stretch reads ANPTGPMHVGH.

The protein belongs to the class-I aminoacyl-tRNA synthetase family. In terms of assembly, monomer.

It is found in the cytoplasm. It catalyses the reaction tRNA(Arg) + L-arginine + ATP = L-arginyl-tRNA(Arg) + AMP + diphosphate. In Paracoccus denitrificans (strain Pd 1222), this protein is Arginine--tRNA ligase.